Consider the following 547-residue polypeptide: Undecaprenyl phosphate-alpha-4-amino-4-deoxy-L-arabinose arabinosyl transferase (547 aa).

11 helical membrane passes run 1–21 (MKLT…LPLD), 83–103 (FASA…ALQL), 111–131 (FLAG…TYSV), 174–194 (FLTK…PYVI), 205–225 (FGPL…IAVH), 253–273 (APFW…LGLL), 286–306 (ISPE…FFSV), 311–331 (LLTY…ASAV), 346–366 (AWLN…LALS), 378–398 (GALA…FIQL), and 408–428 (SALC…QSLI).

It belongs to the glycosyltransferase 83 family.

Its subcellular location is the cell inner membrane. It catalyses the reaction 4-amino-4-deoxy-alpha-L-arabinopyranosyl di-trans,octa-cis-undecaprenyl phosphate + lipid IVA = lipid IIA + di-trans,octa-cis-undecaprenyl phosphate.. It functions in the pathway lipopolysaccharide metabolism; 4-amino-4-deoxy-beta-L-arabinose-lipid A biosynthesis. Its function is as follows. Catalyzes the transfer of the L-Ara4N moiety of the glycolipid undecaprenyl phosphate-alpha-L-Ara4N to lipid A. The modified arabinose is attached to lipid A and is required for resistance to polymyxin and cationic antimicrobial peptides. This Aeromonas salmonicida (strain A449) protein is Undecaprenyl phosphate-alpha-4-amino-4-deoxy-L-arabinose arabinosyl transferase.